A 55-amino-acid chain; its full sequence is Methylmalonyl-CoA decarboxylase subunit epsilon (55 aa).

In terms of assembly, the methylmalonyl-CoA decarboxylase is composed of five subunits: the carboxyltransferase alpha subunit (MmdA), the tunnel beta subunit (MmdB), the biotin-containing gamma subunit (MmdC), and the delta (MmdD) and epsilon (MmdE) subunits.

The protein resides in the cell membrane. The enzyme catalyses (S)-methylmalonyl-CoA + Na(+)(in) + H(+)(out) = propanoyl-CoA + Na(+)(out) + CO2. Its activity is regulated as follows. Completely inhibited by avidin. In terms of biological role, subunit of the sodium ion pump methylmalonyl-CoA decarboxylase, which converts the chemical energy of a decarboxylation reaction into an electrochemical gradient of Na(+) ions across the cytoplasmic membrane, thereby creating a sodium ion motive force that is used for ATP synthesis. The epsilon subunit seems not important for the catalysis of either decarboxylation or Na(+) transport, but it improves binding of the alpha subunit and plays an important role in stabilizing the methylmalonyl-CoA-decarboxylase enzyme complex. Can also convert malonyl-CoA into acetyl-CoA. The chain is Methylmalonyl-CoA decarboxylase subunit epsilon from Veillonella parvula (Staphylococcus parvulus).